Consider the following 150-residue polypeptide: Large ribosomal subunit protein uL15 (150 aa).

Residues 18–43 (IVGRGSSSGWGKTSGKGHKGQQARSG) form a disordered region.

It belongs to the universal ribosomal protein uL15 family. In terms of assembly, part of the 50S ribosomal subunit.

Binds to the 23S rRNA. This Treponema denticola (strain ATCC 35405 / DSM 14222 / CIP 103919 / JCM 8153 / KCTC 15104) protein is Large ribosomal subunit protein uL15.